Here is a 428-residue protein sequence, read N- to C-terminus: Mitochondrial distribution and morphology protein 12 (428 aa).

In terms of domain architecture, SMP-LTD spans 1 to 387 (MSFDINWNQL…WPSWICIDMN (387 aa)). 2 disordered regions span residues 75–168 (VMNE…APPL) and 387–428 (NDDD…EAGE). A compositionally biased stretch (basic and acidic residues) spans 81 to 96 (NDSKDEHLKNHGDGIN). Acidic residues predominate over residues 106–133 (LDDEDEDDEDDDEDDEDEEEEDEDDYDD). Residues 146-161 (LNFNENSTTPSANSFA) show a composition bias toward polar residues. A compositionally biased stretch (acidic residues) spans 387–403 (NDDDDEEEEEEESEDND). The segment covering 412–428 (NDGKHGDGRTDETEAGE) has biased composition (basic and acidic residues).

Belongs to the MDM12 family. As to quaternary structure, component of the ER-mitochondria encounter structure (ERMES) or MDM complex, composed of MMM1, MDM10, MDM12 and MDM34. An MMM1 homodimer associates with one molecule of MDM12 on each side in a pairwise head-to-tail manner, and the SMP-LTD domains of MMM1 and MDM12 generate a continuous hydrophobic tunnel for phospholipid trafficking.

It is found in the mitochondrion outer membrane. Its subcellular location is the endoplasmic reticulum membrane. Component of the ERMES/MDM complex, which serves as a molecular tether to connect the endoplasmic reticulum (ER) and mitochondria. Components of this complex are involved in the control of mitochondrial shape and protein biogenesis, and function in nonvesicular lipid trafficking between the ER and mitochondria. MDM12 is required for the interaction of the ER-resident membrane protein MMM1 and the outer mitochondrial membrane-resident beta-barrel protein MDM10. The MDM12-MMM1 subcomplex functions in the major beta-barrel assembly pathway that is responsible for biogenesis of all mitochondrial outer membrane beta-barrel proteins, and acts in a late step after the SAM complex. The MDM10-MDM12-MMM1 subcomplex further acts in the TOM40-specific pathway after the action of the MDM12-MMM1 complex. Essential for establishing and maintaining the structure of mitochondria and maintenance of mtDNA nucleoids. In Candida albicans (strain SC5314 / ATCC MYA-2876) (Yeast), this protein is Mitochondrial distribution and morphology protein 12.